The following is a 194-amino-acid chain: ATP-dependent Clp protease proteolytic subunit (194 aa).

Catalysis depends on serine 98, which acts as the Nucleophile. Histidine 123 is an active-site residue.

The protein belongs to the peptidase S14 family. As to quaternary structure, fourteen ClpP subunits assemble into 2 heptameric rings which stack back to back to give a disk-like structure with a central cavity, resembling the structure of eukaryotic proteasomes.

It localises to the cytoplasm. It catalyses the reaction Hydrolysis of proteins to small peptides in the presence of ATP and magnesium. alpha-casein is the usual test substrate. In the absence of ATP, only oligopeptides shorter than five residues are hydrolyzed (such as succinyl-Leu-Tyr-|-NHMec, and Leu-Tyr-Leu-|-Tyr-Trp, in which cleavage of the -Tyr-|-Leu- and -Tyr-|-Trp bonds also occurs).. Cleaves peptides in various proteins in a process that requires ATP hydrolysis. Has a chymotrypsin-like activity. Plays a major role in the degradation of misfolded proteins. In Ruminiclostridium cellulolyticum (strain ATCC 35319 / DSM 5812 / JCM 6584 / H10) (Clostridium cellulolyticum), this protein is ATP-dependent Clp protease proteolytic subunit.